Here is a 308-residue protein sequence, read N- to C-terminus: Putative mitochondrial transporter UCP3 (308 aa).

At 1–10 the chain is on the mitochondrial intermembrane side; the sequence is MVGLQPSEVP. Residues 11–32 traverse the membrane as a helical segment; that stretch reads PTTVVKFLGAGTAACFADLLTF. Solcar repeat units lie at residues 11–102, 111–202, and 211–296; these read PTTV…VKQF, SSVA…IKEK, and DNFP…LKRA. Topologically, residues 33–73 are mitochondrial matrix; that stretch reads PLDTAKVRLQIQGENPGVQSVQYRGVLGTILTMVRTEGPRS. A helical membrane pass occupies residues 74–96; sequence PYSGLVAGLHRQMSFASIRIGLY. The Mitochondrial intermembrane segment spans residues 97-116; that stretch reads DSVKQFYTPKGTDHSSVAIR. The chain crosses the membrane as a helical span at residues 117-133; sequence ILAGCTTGAMAVTCAQP. At 134-179 the chain is on the mitochondrial matrix side; that stretch reads TDVVKVRFQAMIRLGTGGERKYRGTMDAYRTIAREEGVRGLWKGTW. The helical transmembrane segment at 180–196 threads the bilayer; it reads PNITRNAIVNCAEMVTY. Topologically, residues 197-213 are mitochondrial intermembrane; it reads DIIKEKLLDSHLFTDNF. Residues 214 to 233 form a helical membrane-spanning segment; sequence PCHFVSAFGAGFCATVVASP. Residues 234–267 are Mitochondrial matrix-facing; that stretch reads VDVVKTRYMNAPPGRYRSPLHCMLRMVAQEGPTA. The chain crosses the membrane as a helical span at residues 268 to 290; that stretch reads FYKGFMPSFLRLGSWNVMMFVTY. The purine nucleotide binding stretch occupies residues 275 to 297; the sequence is SFLRLGSWNVMMFVTYEQLKRAL. Residues 291–308 are Mitochondrial intermembrane-facing; it reads EQLKRALMKVQVLRESPF.

It belongs to the mitochondrial carrier (TC 2.A.29) family. Interacts with HAX1; the interaction is direct and calcium-dependent.

Its subcellular location is the mitochondrion inner membrane. Putative transmembrane transporter that plays a role in mitochondrial metabolism via an as yet unclear mechanism. Originally, this mitochondrial protein was thought to act as a proton transmembrane transporter from the mitochondrial intermembrane space into the matrix, causing proton leaks through the inner mitochondrial membrane, thereby uncoupling mitochondrial membrane potential generation from ATP synthesis. However, this function is controversial and uncoupling may not be the function, or at least not the main function, but rather a consequence of more conventional metabolite transporter activity. This chain is Putative mitochondrial transporter UCP3, found in Rattus norvegicus (Rat).